Consider the following 327-residue polypeptide: Undecaprenyl-phosphate 4-deoxy-4-formamido-L-arabinose transferase (327 aa).

Over 1–235 (MFDAAPIKKV…TCLTTTPLRL (235 aa)) the chain is Cytoplasmic. Residues 236–256 (LSLLGSVIAIGGFSLSVLLIV) form a helical membrane-spanning segment. Residues 257–269 (LRLALGPQWAAEG) are Periplasmic-facing. A helical transmembrane segment spans residues 270-290 (VFMLFAVLFTFIGAQFIGMGL). The Cytoplasmic segment spans residues 291–327 (LGEYIGRIYNDVRARPRYFVQQVIYPESTPFTEESHQ).

The protein belongs to the glycosyltransferase 2 family.

It localises to the cell inner membrane. The enzyme catalyses UDP-4-deoxy-4-formamido-beta-L-arabinose + di-trans,octa-cis-undecaprenyl phosphate = 4-deoxy-4-formamido-alpha-L-arabinopyranosyl di-trans,octa-cis-undecaprenyl phosphate + UDP. It participates in glycolipid biosynthesis; 4-amino-4-deoxy-alpha-L-arabinose undecaprenyl phosphate biosynthesis; 4-amino-4-deoxy-alpha-L-arabinose undecaprenyl phosphate from UDP-4-deoxy-4-formamido-beta-L-arabinose and undecaprenyl phosphate: step 1/2. The protein operates within bacterial outer membrane biogenesis; lipopolysaccharide biosynthesis. Catalyzes the transfer of 4-deoxy-4-formamido-L-arabinose from UDP to undecaprenyl phosphate. The modified arabinose is attached to lipid A and is required for resistance to polymyxin and cationic antimicrobial peptides. This chain is Undecaprenyl-phosphate 4-deoxy-4-formamido-L-arabinose transferase, found in Salmonella dublin (strain CT_02021853).